Here is a 95-residue protein sequence, read N- to C-terminus: uncharacterized protein (95 aa).

The helical transmembrane segment at 12–32 threads the bilayer; it reads LASLIVSMVVLVVGLALWFFV. Residues 66–87 form a disordered region; it reads ANEPEKEAEPATAASEPKEDED.

It is found in the cell membrane. This is an uncharacterized protein from Salmonella typhi.